We begin with the raw amino-acid sequence, 343 residues long: Phosphoribosylformylglycinamidine cyclo-ligase (343 aa).

This sequence belongs to the AIR synthase family.

The protein resides in the cytoplasm. It catalyses the reaction 2-formamido-N(1)-(5-O-phospho-beta-D-ribosyl)acetamidine + ATP = 5-amino-1-(5-phospho-beta-D-ribosyl)imidazole + ADP + phosphate + H(+). Its pathway is purine metabolism; IMP biosynthesis via de novo pathway; 5-amino-1-(5-phospho-D-ribosyl)imidazole from N(2)-formyl-N(1)-(5-phospho-D-ribosyl)glycinamide: step 2/2. The chain is Phosphoribosylformylglycinamidine cyclo-ligase from Thermodesulfovibrio yellowstonii (strain ATCC 51303 / DSM 11347 / YP87).